The primary structure comprises 156 residues: Small ribosomal subunit protein uS7 (156 aa).

The protein belongs to the universal ribosomal protein uS7 family. In terms of assembly, part of the 30S ribosomal subunit. Contacts proteins S9 and S11.

One of the primary rRNA binding proteins, it binds directly to 16S rRNA where it nucleates assembly of the head domain of the 30S subunit. Is located at the subunit interface close to the decoding center, probably blocks exit of the E-site tRNA. This chain is Small ribosomal subunit protein uS7, found in Thiobacillus denitrificans (strain ATCC 25259 / T1).